Consider the following 237-residue polypeptide: Ribonuclease 3 (237 aa).

One can recognise an RNase III domain in the interval 4–133 (LTELEKSLGV…VLAAIYLDKG (130 aa)). Position 46 (Glu-46) interacts with Mg(2+). Catalysis depends on residues Asp-50 and Glu-122. Glu-122 contributes to the Mg(2+) binding site. The region spanning 160–229 (DYKSRLQELV…AKEALQQFEN (70 aa)) is the DRBM domain.

It belongs to the ribonuclease III family. In terms of assembly, homodimer. Mg(2+) is required as a cofactor.

The protein resides in the cytoplasm. It catalyses the reaction Endonucleolytic cleavage to 5'-phosphomonoester.. In terms of biological role, digests double-stranded RNA. Involved in the processing of primary rRNA transcript to yield the immediate precursors to the large and small rRNAs (23S and 16S). Processes some mRNAs, and tRNAs when they are encoded in the rRNA operon. Processes pre-crRNA and tracrRNA of type II CRISPR loci if present in the organism. The polypeptide is Ribonuclease 3 (Dehalococcoides mccartyi (strain ATCC BAA-2266 / KCTC 15142 / 195) (Dehalococcoides ethenogenes (strain 195))).